The sequence spans 163 residues: Lipoprotein signal peptidase (163 aa).

Helical transmembrane passes span Ser-4–Leu-24, Leu-66–Trp-86, and Asp-92–Ile-112. Active-site residues include Asp-122 and Asp-140. Residues Ser-132–Leu-152 form a helical membrane-spanning segment.

This sequence belongs to the peptidase A8 family.

It localises to the cell inner membrane. The enzyme catalyses Release of signal peptides from bacterial membrane prolipoproteins. Hydrolyzes -Xaa-Yaa-Zaa-|-(S,diacylglyceryl)Cys-, in which Xaa is hydrophobic (preferably Leu), and Yaa (Ala or Ser) and Zaa (Gly or Ala) have small, neutral side chains.. It functions in the pathway protein modification; lipoprotein biosynthesis (signal peptide cleavage). Functionally, this protein specifically catalyzes the removal of signal peptides from prolipoproteins. This Allorhizobium ampelinum (strain ATCC BAA-846 / DSM 112012 / S4) (Agrobacterium vitis (strain S4)) protein is Lipoprotein signal peptidase.